The following is a 527-amino-acid chain: Endogenous retrovirus group FC1 member 1 Env polyprotein (527 aa).

Positions 1–411 are surface protein; that stretch reads MNSPCDRLQQ…EPRPQNKSKW (411 aa). Positions 280 to 283 match the CXXC motif; that stretch reads CFLC. The tract at residues 412-432 is fusion peptide; that stretch reads AIFLPLVLGISLASSLVASGL. Residues 412 to 527 form a transmembrane protein region; the sequence is AIFLPLVLGI…LKKKKSSKRS (116 aa). The CKS-17 signature appears at 477-493; that stretch reads AQNRQALDLLMAEKGRT. C494 and C501 are oxidised to a cystine. The short motif at 494–502 is the CX6CC element; that stretch reads CLFLQEECC.

This sequence belongs to the gamma type-C retroviral envelope protein family. HERV class-I F(c)2 env subfamily. The CXXC motif is highly conserved across a broad range of retroviral envelope proteins. It is thought to participate in the formation of a labile disulfide bond possibly with the CX6CC motif present in the transmembrane domain. As to expression, low expression in skin and testis.

The protein resides in the virion. In terms of biological role, retroviral envelope proteins mediate receptor recognition and membrane fusion during early infection. Endogenous envelope proteins may have kept, lost or modified their original function during evolution. This endogenous envelope protein has lost its original fusogenic properties. The sequence is that of Endogenous retrovirus group FC1 member 1 Env polyprotein (ERVFC1-1) from Homo sapiens (Human).